The chain runs to 326 residues: MTLDEIAKLAGVSKTTASYVINGKAQKYRISEKTQHKVMAVVEQYNFRPDHAASALRAGNSRSFGLIIPDLENTSYARLAKLLEQNSRQAGYQILIACSDDDPQIEMAAAEALVSRRIDALFVASGIPSASEYYLKLQQSGTPVIAIDRALDDEYFSCVISEDFGAAFELTRSVLTQDVHSVGLVGALPELNVSREREQGFAMAVKQRGLPTTLGYGEHFNREEGRKVFAKWVANDQLPDAVVATSYTLLEGILDVLLEQPELMQKVRLATFGDNRLLDFLPIRVNSLPQQFELIADSALALALNASAKRYQTGIELIPRQLKVRT.

The HTH lacI-type domain occupies 1–58; that stretch reads MTLDEIAKLAGVSKTTASYVINGKAQKYRISEKTQHKVMAVVEQYNFRPDHAASALRA. The H-T-H motif DNA-binding region spans 3-22; the sequence is LDEIAKLAGVSKTTASYVIN.

Homodimer.

Its activity is regulated as follows. Interaction with F1P may induce a structural change in the DNA spacer region between the -35 and -10 elements, thereby facilitating RNAP binding to the promoter to trigger the transcriptional activation of the fru operon. Interaction with F1P does not release FruR from its binding sequence. Functionally, regulates the expression of the fruBKA (fru) operon, which encodes proteins involved in the import and metabolism of fructose. In the absence of fructose 1-phosphate (F1P), binds to the promoter region of fruB, interferes with the binding of the RNA polymerase (RNAP) to the promoter and represses the expression of the operon. In the presence of F1P, activates the transcription of the fru operon by facilitating the binding of RNAP to the promoter. Essential for the expression of the fru operon and thus for growth on fructose. This chain is Fructose operon regulatory protein, found in Vibrio cholerae serotype O1 (strain ATCC 39315 / El Tor Inaba N16961).